The following is a 385-amino-acid chain: 1-deoxy-D-xylulose 5-phosphate reductoisomerase (385 aa).

NADPH contacts are provided by Thr10, Gly11, Ser12, Ile13, Lys37, and Asn124. Lys125 lines the 1-deoxy-D-xylulose 5-phosphate pocket. NADPH is bound at residue Glu126. Asp150 contacts Mn(2+). Residues Ser151, Glu152, Ser176, and His199 each contribute to the 1-deoxy-D-xylulose 5-phosphate site. Residue Glu152 participates in Mn(2+) binding. Residue Gly205 coordinates NADPH. 1-deoxy-D-xylulose 5-phosphate-binding residues include Ser212, Asn217, Lys218, and Glu221. Glu221 is a binding site for Mn(2+).

This sequence belongs to the DXR family. Mg(2+) serves as cofactor. The cofactor is Mn(2+).

It catalyses the reaction 2-C-methyl-D-erythritol 4-phosphate + NADP(+) = 1-deoxy-D-xylulose 5-phosphate + NADPH + H(+). The protein operates within isoprenoid biosynthesis; isopentenyl diphosphate biosynthesis via DXP pathway; isopentenyl diphosphate from 1-deoxy-D-xylulose 5-phosphate: step 1/6. Catalyzes the NADPH-dependent rearrangement and reduction of 1-deoxy-D-xylulose-5-phosphate (DXP) to 2-C-methyl-D-erythritol 4-phosphate (MEP). The polypeptide is 1-deoxy-D-xylulose 5-phosphate reductoisomerase (Clostridium botulinum (strain Loch Maree / Type A3)).